The chain runs to 115 residues: Ribonuclease P protein component (115 aa).

It belongs to the RnpA family. As to quaternary structure, consists of a catalytic RNA component (M1 or rnpB) and a protein subunit.

The enzyme catalyses Endonucleolytic cleavage of RNA, removing 5'-extranucleotides from tRNA precursor.. Functionally, RNaseP catalyzes the removal of the 5'-leader sequence from pre-tRNA to produce the mature 5'-terminus. It can also cleave other RNA substrates such as 4.5S RNA. The protein component plays an auxiliary but essential role in vivo by binding to the 5'-leader sequence and broadening the substrate specificity of the ribozyme. This is Ribonuclease P protein component from Staphylococcus aureus (strain Mu3 / ATCC 700698).